A 599-amino-acid chain; its full sequence is Purine-uracil permease NCS1 (599 aa).

12 consecutive transmembrane segments (helical) span residues 140 to 160 (LWIGLVVGVPTYYLAGSLVDL), 164 to 184 (WWQGIATVVTANLILLVPLVL), 218 to 238 (LVGCGWYGIETWIGGEAIFLL), 257 to 277 (TSPLEFSCFIVFWLAQLCIVW), 293 to 313 (ILISLTSCLLAWSYLKAGGFG), 327 to 347 (FWTLFFPSLTANISFWATLAL), 363 to 383 (IIGQVGLPVFMGLFTFVGVAV), 411 to 433 (TLLAIVGISLATLTTNIAANVVA), 445 to 465 (FFTFGRGAFLTAVLGIVFQPW), 474 to 494 (FVYTWLIGYSALLGPIGGIIL), 525 to 545 (YNVAAVVALVAGIIPVVPGFL), and 560 to 580 (VVYDNALFFSFIIAGFVYWII).

Belongs to the purine-cytosine permease (2.A.39) family. As to expression, expressed in roots, leaves, stems, flowers, siliques and seeds.

It localises to the plastid. Its subcellular location is the chloroplast envelope. The protein localises to the chloroplast membrane. Nucleobase-proton symporter that facilitates the uptake of nucleobases in the cells. Can transport adenine, guanine and uracil. Contributes to uracil import into plastids for plastidic uracil salvage which is essential for plant growth and development. The chain is Purine-uracil permease NCS1 from Arabidopsis thaliana (Mouse-ear cress).